The sequence spans 196 residues: Holliday junction branch migration complex subunit RuvA (196 aa).

Residues 1–63 are domain I; the sequence is MINKIYGKIV…DDDVKLFGFL (63 aa). The interval 64 to 142 is domain II; it reads NISEREVFED…KGDESSSYML (79 aa). K143 is a region of interest (flexible linker). Residues 143-196 form a domain III region; sequence KFKELEQSIVNMGFDRKLVVVAFREIMLSDKFLILKEAEQEQFLFTETLKRLSV.

Belongs to the RuvA family. In terms of assembly, homotetramer. Forms an RuvA(8)-RuvB(12)-Holliday junction (HJ) complex. HJ DNA is sandwiched between 2 RuvA tetramers; dsDNA enters through RuvA and exits via RuvB. An RuvB hexamer assembles on each DNA strand where it exits the tetramer. Each RuvB hexamer is contacted by two RuvA subunits (via domain III) on 2 adjacent RuvB subunits; this complex drives branch migration. In the full resolvosome a probable DNA-RuvA(4)-RuvB(12)-RuvC(2) complex forms which resolves the HJ.

Its subcellular location is the cytoplasm. The RuvA-RuvB-RuvC complex processes Holliday junction (HJ) DNA during genetic recombination and DNA repair, while the RuvA-RuvB complex plays an important role in the rescue of blocked DNA replication forks via replication fork reversal (RFR). RuvA specifically binds to HJ cruciform DNA, conferring on it an open structure. The RuvB hexamer acts as an ATP-dependent pump, pulling dsDNA into and through the RuvAB complex. HJ branch migration allows RuvC to scan DNA until it finds its consensus sequence, where it cleaves and resolves the cruciform DNA. The chain is Holliday junction branch migration complex subunit RuvA from Borrelia duttonii (strain Ly).